Consider the following 188-residue polypeptide: Elongation factor P (188 aa).

This sequence belongs to the elongation factor P family.

The protein localises to the cytoplasm. The protein operates within protein biosynthesis; polypeptide chain elongation. Involved in peptide bond synthesis. Stimulates efficient translation and peptide-bond synthesis on native or reconstituted 70S ribosomes in vitro. Probably functions indirectly by altering the affinity of the ribosome for aminoacyl-tRNA, thus increasing their reactivity as acceptors for peptidyl transferase. The protein is Elongation factor P of Caulobacter sp. (strain K31).